A 298-amino-acid chain; its full sequence is Cyclin-C (298 aa).

One can recognise a Cyclin N-terminal domain in the interval 46–162; sequence NFITAVATEC…ILDCCLVVHH (117 aa). Residues 278–298 are disordered; sequence KLPKPNTPIPPPQQQQSSYHM.

This sequence belongs to the cyclin family. Cyclin C subfamily. Component of the Mediator complex.

Its subcellular location is the nucleus. Component of the Mediator complex, a coactivator involved in regulated gene transcription of nearly all RNA polymerase II-dependent genes. Mediator functions as a bridge to convey information from gene-specific regulatory proteins to the basal RNA polymerase II transcription machinery. Mediator is recruited to promoters by direct interactions with regulatory proteins and serves as a scaffold for the assembly of a functional preinitiation complex with RNA polymerase II and the general transcription factors. Binds to and activates cyclin-dependent kinase cdk-8 that phosphorylates the CTD (C-terminal domain) of the large subunit of RNA polymerase II (RNAp II), which may inhibit the formation of a transcription initiation complex. This is Cyclin-C (cic-1) from Caenorhabditis briggsae.